A 231-amino-acid polypeptide reads, in one-letter code: Cytochrome c oxidase subunit 2 (231 aa).

The Mitochondrial intermembrane segment spans residues 1–14 (MAHPAQLGLQNATS). The helical transmembrane segment at 15–45 (PIMEELIAFHDHALMIIFLISSLVLYIISLM) threads the bilayer. Residues 46-59 (LTTKLTHTSTMNAQ) lie on the Mitochondrial matrix side of the membrane. Residues 60–87 (EIEMVWTILPAIILIMIALPSLRILYMT) traverse the membrane as a helical segment. The Mitochondrial intermembrane segment spans residues 88–231 (DEFNKPYLTL…WASYLYIVSL (144 aa)). Cu cation-binding residues include H161, C196, E198, C200, H204, and M207. Residue E198 coordinates Mg(2+).

This sequence belongs to the cytochrome c oxidase subunit 2 family. Component of the cytochrome c oxidase (complex IV, CIV), a multisubunit enzyme composed of 14 subunits. The complex is composed of a catalytic core of 3 subunits MT-CO1, MT-CO2 and MT-CO3, encoded in the mitochondrial DNA, and 11 supernumerary subunits COX4I, COX5A, COX5B, COX6A, COX6B, COX6C, COX7A, COX7B, COX7C, COX8 and NDUFA4, which are encoded in the nuclear genome. The complex exists as a monomer or a dimer and forms supercomplexes (SCs) in the inner mitochondrial membrane with NADH-ubiquinone oxidoreductase (complex I, CI) and ubiquinol-cytochrome c oxidoreductase (cytochrome b-c1 complex, complex III, CIII), resulting in different assemblies (supercomplex SCI(1)III(2)IV(1) and megacomplex MCI(2)III(2)IV(2)). Found in a complex with TMEM177, COA6, COX18, COX20, SCO1 and SCO2. Interacts with TMEM177 in a COX20-dependent manner. Interacts with COX20. Interacts with COX16. The cofactor is Cu cation.

It is found in the mitochondrion inner membrane. The enzyme catalyses 4 Fe(II)-[cytochrome c] + O2 + 8 H(+)(in) = 4 Fe(III)-[cytochrome c] + 2 H2O + 4 H(+)(out). Its function is as follows. Component of the cytochrome c oxidase, the last enzyme in the mitochondrial electron transport chain which drives oxidative phosphorylation. The respiratory chain contains 3 multisubunit complexes succinate dehydrogenase (complex II, CII), ubiquinol-cytochrome c oxidoreductase (cytochrome b-c1 complex, complex III, CIII) and cytochrome c oxidase (complex IV, CIV), that cooperate to transfer electrons derived from NADH and succinate to molecular oxygen, creating an electrochemical gradient over the inner membrane that drives transmembrane transport and the ATP synthase. Cytochrome c oxidase is the component of the respiratory chain that catalyzes the reduction of oxygen to water. Electrons originating from reduced cytochrome c in the intermembrane space (IMS) are transferred via the dinuclear copper A center (CU(A)) of subunit 2 and heme A of subunit 1 to the active site in subunit 1, a binuclear center (BNC) formed by heme A3 and copper B (CU(B)). The BNC reduces molecular oxygen to 2 water molecules using 4 electrons from cytochrome c in the IMS and 4 protons from the mitochondrial matrix. The polypeptide is Cytochrome c oxidase subunit 2 (MT-CO2) (Lagothrix lagotricha (Brown woolly monkey)).